Here is a 608-residue protein sequence, read N- to C-terminus: Elongation factor 4 (608 aa).

A tr-type G domain is found at 11 to 193 (DRIRNFSIIA…QIVQKIPAPS (183 aa)). GTP contacts are provided by residues 23-28 (DHGKST) and 140-143 (NKID).

Belongs to the TRAFAC class translation factor GTPase superfamily. Classic translation factor GTPase family. LepA subfamily.

It localises to the cell membrane. The enzyme catalyses GTP + H2O = GDP + phosphate + H(+). Required for accurate and efficient protein synthesis under certain stress conditions. May act as a fidelity factor of the translation reaction, by catalyzing a one-codon backward translocation of tRNAs on improperly translocated ribosomes. Back-translocation proceeds from a post-translocation (POST) complex to a pre-translocation (PRE) complex, thus giving elongation factor G a second chance to translocate the tRNAs correctly. Binds to ribosomes in a GTP-dependent manner. In Anoxybacillus flavithermus (strain DSM 21510 / WK1), this protein is Elongation factor 4.